Here is a 235-residue protein sequence, read N- to C-terminus: Leucyl/phenylalanyl-tRNA--protein transferase (235 aa).

The protein belongs to the L/F-transferase family.

It is found in the cytoplasm. The enzyme catalyses N-terminal L-lysyl-[protein] + L-leucyl-tRNA(Leu) = N-terminal L-leucyl-L-lysyl-[protein] + tRNA(Leu) + H(+). It catalyses the reaction N-terminal L-arginyl-[protein] + L-leucyl-tRNA(Leu) = N-terminal L-leucyl-L-arginyl-[protein] + tRNA(Leu) + H(+). The catalysed reaction is L-phenylalanyl-tRNA(Phe) + an N-terminal L-alpha-aminoacyl-[protein] = an N-terminal L-phenylalanyl-L-alpha-aminoacyl-[protein] + tRNA(Phe). In terms of biological role, functions in the N-end rule pathway of protein degradation where it conjugates Leu, Phe and, less efficiently, Met from aminoacyl-tRNAs to the N-termini of proteins containing an N-terminal arginine or lysine. In Anaeromyxobacter sp. (strain Fw109-5), this protein is Leucyl/phenylalanyl-tRNA--protein transferase.